The following is a 120-amino-acid chain: Large ribosomal subunit protein uL18 (120 aa).

It belongs to the universal ribosomal protein uL18 family. As to quaternary structure, part of the 50S ribosomal subunit; part of the 5S rRNA/L5/L18/L25 subcomplex. Contacts the 5S and 23S rRNAs.

Its function is as follows. This is one of the proteins that bind and probably mediate the attachment of the 5S RNA into the large ribosomal subunit, where it forms part of the central protuberance. The chain is Large ribosomal subunit protein uL18 from Bacillus cytotoxicus (strain DSM 22905 / CIP 110041 / 391-98 / NVH 391-98).